The primary structure comprises 261 residues: Cathepsin G (261 aa).

Residues 1-18 form the signal peptide; sequence MQPLLLLLTFILLQGDEA. The propeptide at 19–20 is activation peptide; the sequence is GK. Residues 21-25 are important for antimicrobial activity; it reads IIGGR. In terms of domain architecture, Peptidase S1 spans 21–243; it reads IIGGREARPH…FMPWIKRTMR (223 aa). Cys49 and Cys65 are joined by a disulfide. His64 functions as the Charge relay system in the catalytic mechanism. An N-linked (GlcNAc...) asparagine glycan is attached at Asn71. Residues 97–111 are important for antimicrobial activity; the sequence is HPDYNPQNIRNDIML. The Charge relay system role is filled by Asp108. Cystine bridges form between Cys142/Cys207 and Cys172/Cys186. Ser201 serves as the catalytic Charge relay system.

The protein belongs to the peptidase S1 family. In terms of tissue distribution, in adult, detected only in bone marrow where expression is restricted to a small population of early myeloid cells.

It is found in the cell membrane. The protein localises to the cytoplasmic granule. It localises to the secreted. The protein resides in the cytoplasm. Its subcellular location is the cytosol. It is found in the lysosome. The protein localises to the nucleus. The enzyme catalyses Specificity similar to chymotrypsin C.. Its activity is regulated as follows. Inhibited by chymostatin, phenylmethanesulfonyl fluoride and diisopropyl fluorophosphate. Serine protease with trypsin- and chymotrypsin-like specificity. Also displays antibacterial activity against Gram-negative and Gram-positive bacteria independent of its protease activity. Prefers Phe and Tyr residues in the P1 position of substrates but also cleaves efficiently after Trp and Leu. Shows a preference for negatively charged amino acids in the P2' position and for aliphatic amino acids both upstream and downstream of the cleavage site. Required for recruitment and activation of platelets which is mediated by the F2RL3/PAR4 platelet receptor. Binds reversibly to and stimulates B cells and CD4(+) and CD8(+) T cells. Also binds reversibly to natural killer (NK) cells and enhances NK cell cytotoxicity through its protease activity. Cleaves complement C3. Cleaves vimentin. Cleaves thrombin receptor F2R/PAR1. Cleaves the synovial mucin-type protein PRG4/lubricin. Cleaves and activates IL36G which promotes expression of chemokines CXCL1 and CXLC8 in keratinocytes. Cleaves IL33 into mature forms which have greater activity than the unprocessed form. Cleaves coagulation factor F8 to produce a partially activated form. Also cleaves and activates coagulation factor F10. Cleaves leukocyte cell surface protein SPN/CD43 to release its extracellular domain and trigger its intramembrane proteolysis by gamma-secretase, releasing the CD43 cytoplasmic tail chain (CD43-ct) which translocates to the nucleus. During apoptosis, cleaves SMARCA2/BRM to produce a 160 kDa cleavage product which localizes to the cytosol. Cleaves MBP in B cell lysosomes at '221-Phe-|-Lys-222', degrading the major immunogenic MBP epitope and preventing the activation of MBP-specific autoreactive T cells. Cleaves annexin ANXA1 and antimicrobial peptide CAMP to produce peptides which act on neutrophil N-formyl peptide receptors to enhance the release of CXCL2. Acts as a ligand for the N-formyl peptide receptor FPR1, enhancing phagocyte chemotaxis. Has antibacterial activity against the Gram-negative bacteria N.gonorrhoeae and P.aeruginosa. Likely to act against N.gonorrhoeae by interacting with N.gonorrhoeae penA/PBP2. Exhibits potent antimicrobial activity against the Gram-positive bacterium L.monocytogenes. Has antibacterial activity against the Gram-positive bacterium S.aureus and degrades S.aureus biofilms, allowing polymorphonuclear leukocytes to penetrate the biofilm and phagocytose bacteria. Has antibacterial activity against M.tuberculosis. Induces platelet aggregation which is strongly potentiated in the presence of ELANE. This is Cathepsin G (Ctsg) from Mus musculus (Mouse).